A 190-amino-acid polypeptide reads, in one-letter code: Apolipoprotein M (190 aa).

A signal peptide (not cleaved) is located at residues 1-22; sequence MFHQVWAALLSLYGLLFNSMNQ. Disulfide bonds link cysteine 23–cysteine 169, cysteine 95–cysteine 185, and cysteine 130–cysteine 159. Glutamate 138 and arginine 145 together coordinate tetradecanoate.

It belongs to the calycin superfamily. Lipocalin family. Highly divergent. As to quaternary structure, interacts with LRP2; LRP2 mediates APOM renal uptake and subsequent lysosomal degradation. As to expression, expressed by the liver; secreted in plasma.

Its subcellular location is the secreted. Functionally, probably involved in lipid transport. Can bind sphingosine-1-phosphate, myristic acid, palmitic acid and stearic acid, retinol, all-trans-retinoic acid and 9-cis-retinoic acid. In Mus musculus (Mouse), this protein is Apolipoprotein M (Apom).